The following is a 1183-amino-acid chain: DNA-directed RNA polymerase subunit beta (1183 aa).

It belongs to the RNA polymerase beta chain family. In terms of assembly, the RNAP catalytic core consists of 2 alpha, 1 beta, 1 beta' and 1 omega subunit. When a sigma factor is associated with the core the holoenzyme is formed, which can initiate transcription.

It carries out the reaction RNA(n) + a ribonucleoside 5'-triphosphate = RNA(n+1) + diphosphate. Its function is as follows. DNA-dependent RNA polymerase catalyzes the transcription of DNA into RNA using the four ribonucleoside triphosphates as substrates. This is DNA-directed RNA polymerase subunit beta from Staphylococcus aureus (strain COL).